Reading from the N-terminus, the 437-residue chain is Protein farnesyltransferase subunit beta (437 aa).

PFTB repeat units follow at residues 123 to 164, 174 to 215, 222 to 263, 270 to 312, and 332 to 374; these read ATDV…CIIG, REKL…SLTN, FEGT…VILK, LKSL…PLLH, and QQAL…SIAQ. Residues 248 to 251 and 291 to 294 each bind (2E,6E)-farnesyl diphosphate; these read HGGY and RCNK. The Zn(2+) site is built by Asp297 and Cys299. 300-303 provides a ligand contact to (2E,6E)-farnesyl diphosphate; the sequence is YSFW. His362 is a binding site for Zn(2+). Thr436 bears the Phosphothreonine mark.

It belongs to the protein prenyltransferase subunit beta family. As to quaternary structure, heterodimer of FNTA and FNTB. It depends on Zn(2+) as a cofactor.

The catalysed reaction is L-cysteinyl-[protein] + (2E,6E)-farnesyl diphosphate = S-(2E,6E)-farnesyl-L-cysteinyl-[protein] + diphosphate. In terms of biological role, essential subunit of the farnesyltransferase complex. Catalyzes the transfer of a farnesyl moiety from farnesyl diphosphate to a cysteine at the fourth position from the C-terminus of several proteins having the C-terminal sequence Cys-aliphatic-aliphatic-X. The sequence is that of Protein farnesyltransferase subunit beta (FNTB) from Homo sapiens (Human).